Reading from the N-terminus, the 224-residue chain is 7-cyano-7-deazaguanine synthase (224 aa).

9 to 19 (ISGGMDSTLCA) contacts ATP. The Zn(2+) site is built by Cys190, Cys198, Cys201, and Cys204.

This sequence belongs to the QueC family. Zn(2+) serves as cofactor.

The catalysed reaction is 7-carboxy-7-deazaguanine + NH4(+) + ATP = 7-cyano-7-deazaguanine + ADP + phosphate + H2O + H(+). It functions in the pathway purine metabolism; 7-cyano-7-deazaguanine biosynthesis. In terms of biological role, catalyzes the ATP-dependent conversion of 7-carboxy-7-deazaguanine (CDG) to 7-cyano-7-deazaguanine (preQ(0)). The sequence is that of 7-cyano-7-deazaguanine synthase from Campylobacter jejuni subsp. doylei (strain ATCC BAA-1458 / RM4099 / 269.97).